Consider the following 874-residue polypeptide: ATP-dependent RNA helicase DDX54 (874 aa).

A disordered region spans residues 1 to 76 (MAAGRRVGPG…FPTSECVSDV (76 aa)). Residues 20 to 30 (WKKKRLRKRRT) show a composition bias toward basic residues. Thr-30 is modified (phosphothreonine). Phosphoserine occurs at positions 33, 38, 40, and 74. The span at 39–50 (DSDDGEFEIQAE) shows a compositional bias: acidic residues. The short motif at 95–123 (GGFQSMGLSYPVFKGIMKKGYKVPTPIQR) is the Q motif element. Positions 126–298 (IPVILDGKDV…RAGLTEPVLI (173 aa)) constitute a Helicase ATP-binding domain. Residue 139–146 (ARTGSGKT) participates in ATP binding. The DEAD box signature appears at 246–249 (DEAD). One can recognise a Helicase C-terminal domain in the interval 328-472 (YLLQNVVRPQ…ARPCEEPSVA (145 aa)). Over residues 581 to 590 (ASSKDPSSQM) the composition is skewed to polar residues. The segment at 581-687 (ASSKDPSSQM…PKDFDSERGL (107 aa)) is disordered. Low complexity predominate over residues 636–645 (TVEGVFTEVV). Over residues 664 to 685 (ETRQRDQEFYVPYRPKDFDSER) the composition is skewed to basic and acidic residues. A phosphoserine mark is found at Ser-688 and Ser-690. The disordered stretch occupies residues 712–874 (AQNMSRGQQQ…SRKGKMRKRM (163 aa)). Residues 713 to 722 (QNMSRGQQQL) show a composition bias toward polar residues. Basic and acidic residues-rich tracts occupy residues 737 to 747 (QEDKKKIKTES) and 755 to 771 (YKRDLYQKWKQKQKIDD). Residues Ser-774 and Ser-780 each carry the phosphoserine modification. Residues 812–823 (MRSELKTKEQIL) show a composition bias toward basic and acidic residues. The segment covering 864–874 (PSRKGKMRKRM) has biased composition (basic residues).

Belongs to the DEAD box helicase family. DDX54/DBP10 subfamily. In terms of assembly, interacts in a hormone-dependent manner with nuclear receptors.

It is found in the nucleus. It localises to the nucleolus. It carries out the reaction ATP + H2O = ADP + phosphate + H(+). Has RNA-dependent ATPase activity. Represses the transcriptional activity of nuclear receptors. This chain is ATP-dependent RNA helicase DDX54 (Ddx54), found in Mus musculus (Mouse).